A 91-amino-acid chain; its full sequence is UPF0250 protein PSEEN4821 (91 aa).

Belongs to the UPF0250 family.

This is UPF0250 protein PSEEN4821 from Pseudomonas entomophila (strain L48).